The chain runs to 37 residues: uncharacterized protein (37 aa).

Belongs to the poxviridae A56.5 protein family.

This is an uncharacterized protein from Vaccinia virus (strain Western Reserve) (VACV).